Here is a 253-residue protein sequence, read N- to C-terminus: Methionine-R-sulfoxide reductase B3, mitochondrial (253 aa).

The signal sequence occupies residues 1–56 (MPPAAPSVARSREGGGIGQRRLVFPKSARRTLPCPIALCLGLCLAAAAATTTRASA). Lysine 102 carries the N6-acetyllysine modification. Residues 107 to 229 (QQELRKRLTP…NSASLSFTPA (123 aa)) enclose the MsrB domain. Residues cysteine 146, cysteine 149, cysteine 195, and cysteine 198 each coordinate Zn(2+). Cysteine 218 (nucleophile) is an active-site residue. The segment at 227-253 (TPADSSEAEGSGIKESGSPAAADRAEL) is disordered. Serine 244 carries the phosphoserine modification. Positions 250–253 (RAEL) match the Endoplasmic reticulum retention signal motif.

Belongs to the MsrB Met sulfoxide reductase family. Monomer. Requires Zn(2+) as cofactor. In terms of tissue distribution, widely expressed. Detected in the sensory epithelia of the organ of Corti and vestibular end organs as early as P2 up to adulthood (at protein level). In the organ of Corti, present in inner and outer hair cells and, to a lesser extent, in supporting cells (at protein level). In hair cells, distributed throughout the cell body. Barely detectable level in stereocilia. Also observed in spiral ganglion neurons, but not in the stria vascularis. In the vestibular end organs, found throughout the sensory epithelium, but more intense expression in hair cells than in supporting cells (at protein level). In vestibular hair cells, present within cell bodies and to a lesser extent in kinocilia. Barely detectable in stereocilia.

It is found in the endoplasmic reticulum. The enzyme catalyses L-methionyl-[protein] + [thioredoxin]-disulfide + H2O = L-methionyl-(R)-S-oxide-[protein] + [thioredoxin]-dithiol. The catalysed reaction is [thioredoxin]-disulfide + L-methionine + H2O = L-methionine (R)-S-oxide + [thioredoxin]-dithiol. Functionally, catalyzes the reduction of free and protein-bound methionine sulfoxide to methionine. This Mus musculus (Mouse) protein is Methionine-R-sulfoxide reductase B3, mitochondrial (Msrb3).